A 73-amino-acid chain; its full sequence is Kappa-scoloptoxin SsmTx-I (73 aa).

The first 25 residues, Met1–Gly25, serve as a signal peptide directing secretion. Residues Glu26 to Arg37 constitute a propeptide that is removed on maturation. Cystine bridges form between Cys45–Cys56 and Cys50–Cys63.

Belongs to the scoloptoxin-04 family. Expressed by the venom gland.

It is found in the secreted. In terms of biological role, exhibits highly specific blockage of Kv2.1/KCNB1 (IC(50)=41.7 nM) voltage-gated potassium channels. This blockage is not associated with a significant change in steady-state activation, suggesting that this toxin acts as a channel blocker rather than a gating-modifier. Shows potential analgesic activities in formalin-induced paw licking, thermal pain, and acetic acid-induced abdominal writhing mice models. The sequence is that of Kappa-scoloptoxin SsmTx-I from Scolopendra mutilans (Chinese red-headed centipede).